The primary structure comprises 263 residues: Nuclear egress protein 2 (263 aa).

Topologically, residues 1–235 (MASGKKLIDQ…STSLTGRCPS (235 aa)) are perinuclear space. The helical transmembrane segment at 236–256 (WGAACALLLLSLAVGLMAILA) threads the bilayer. The Nuclear portion of the chain corresponds to 257 to 263 (AKLMQWP).

The protein belongs to the herpesviridae NEC2 protein family. As to quaternary structure, forms a heterohexameric complex with NEC1. Post-translationally, phosphorylated.

The protein localises to the host nucleus inner membrane. Its function is as follows. Plays an essential role in virion nuclear egress, the first step of virion release from infected cell. Within the host nucleus, NEC1 interacts with the newly formed capsid through the vertexes and directs it to the inner nuclear membrane by associating with NEC2. Induces the budding of the capsid at the inner nuclear membrane as well as its envelopment into the perinuclear space. There, the NEC1/NEC2 complex promotes the fusion of the enveloped capsid with the outer nuclear membrane and the subsequent release of the viral capsid into the cytoplasm where it will reach the secondary budding sites in the host Golgi or trans-Golgi network. The sequence is that of Nuclear egress protein 2 from Connochaetes taurinus (Blue wildebeest).